The primary structure comprises 303 residues: Glyceraldehyde-3-phosphate dehydrogenase (303 aa).

NAD(+) contacts are provided by residues 6-7, Asp-28, Arg-72, and Thr-114; that span reads RI. D-glyceraldehyde 3-phosphate contacts are provided by residues 143–145, Thr-174, 203–204, and Arg-226; these read SCT and TG. Cys-144 serves as the catalytic Nucleophile.

The protein belongs to the glyceraldehyde-3-phosphate dehydrogenase family. Homotetramer.

The protein resides in the cytoplasm. The enzyme catalyses D-glyceraldehyde 3-phosphate + phosphate + NAD(+) = (2R)-3-phospho-glyceroyl phosphate + NADH + H(+). Its pathway is carbohydrate degradation; glycolysis; pyruvate from D-glyceraldehyde 3-phosphate: step 1/5. Functionally, catalyzes the oxidative phosphorylation of glyceraldehyde 3-phosphate (G3P) to 1,3-bisphosphoglycerate (BPG) using the cofactor NAD. The first reaction step involves the formation of a hemiacetal intermediate between G3P and a cysteine residue, and this hemiacetal intermediate is then oxidized to a thioester, with concomitant reduction of NAD to NADH. The reduced NADH is then exchanged with the second NAD, and the thioester is attacked by a nucleophilic inorganic phosphate to produce BPG. The protein is Glyceraldehyde-3-phosphate dehydrogenase (gap) of Klebsiella pneumoniae.